The primary structure comprises 208 residues: uncharacterized protein (208 aa).

A signal peptide spans 1 to 34 (MPSHCRERLPFALHFFAVAYGASLWILGSHGLAA).

This is an uncharacterized protein from Sinorhizobium fredii (strain NBRC 101917 / NGR234).